The primary structure comprises 212 residues: Ion-translocating oxidoreductase complex subunit G (212 aa).

Residues 9-29 (GLLLGLFALLCTGLVAIVNQL) traverse the membrane as a helical segment. Position 176 is an FMN phosphoryl threonine (T176).

It belongs to the RnfG family. The complex is composed of six subunits: RnfA, RnfB, RnfC, RnfD, RnfE and RnfG. Requires FMN as cofactor.

It is found in the cell inner membrane. Part of a membrane-bound complex that couples electron transfer with translocation of ions across the membrane. The protein is Ion-translocating oxidoreductase complex subunit G of Shewanella piezotolerans (strain WP3 / JCM 13877).